A 343-amino-acid chain; its full sequence is Aspartate carbamoyltransferase catalytic subunit (343 aa).

Carbamoyl phosphate contacts are provided by Arg-91 and Thr-92. Residue Lys-119 coordinates L-aspartate. Carbamoyl phosphate is bound by residues Arg-141, His-171, and Gln-174. 2 residues coordinate L-aspartate: Arg-204 and Arg-259. Carbamoyl phosphate contacts are provided by Gly-300 and Pro-301.

The protein belongs to the aspartate/ornithine carbamoyltransferase superfamily. ATCase family. Heterododecamer (2C3:3R2) of six catalytic PyrB chains organized as two trimers (C3), and six regulatory PyrI chains organized as three dimers (R2).

The catalysed reaction is carbamoyl phosphate + L-aspartate = N-carbamoyl-L-aspartate + phosphate + H(+). The protein operates within pyrimidine metabolism; UMP biosynthesis via de novo pathway; (S)-dihydroorotate from bicarbonate: step 2/3. Functionally, catalyzes the condensation of carbamoyl phosphate and aspartate to form carbamoyl aspartate and inorganic phosphate, the committed step in the de novo pyrimidine nucleotide biosynthesis pathway. The sequence is that of Aspartate carbamoyltransferase catalytic subunit from Burkholderia cenocepacia (strain HI2424).